A 275-amino-acid chain; its full sequence is LIM/homeobox protein Awh (275 aa).

LIM zinc-binding domains follow at residues 6–67 and 68–129; these read RSCA…NFGA and KCSK…TVEG. Threonine 126 is subject to Phosphothreonine. The homeobox DNA-binding region spans 148–207; it reads TKRVRTTFTEEQLQVLQANFQIDSNPDGQDLERIASVTGLSKRVTQVWFQNSRARQKKHI. The tract at residues 253-275 is disordered; the sequence is PTHESSMDELSQDSSVHCMPSEV.

As to expression, first detected in neuroblasts in stage 9 embryos. Expressed in all 10 abdominal segments and in the labial segment during early embryogenesis. Expressed in the stage 14 developing epithelium. By embryonic stage 16, expression is refined to the abdominal histoblasts and salivary gland imaginal ring cells. Expressed in both larval and imaginal cells between the salivary gland and the salivary gland imaginal ring, in late third instar larvae. Also expressed in specific areas of the larval wing, leg and eye-antennal disks.

The protein resides in the nucleus. Probable transcription factor. Required for the establishment of a subset of imaginal tissues: the abdominal histoblasts and the salivary gland imaginal rings. This Drosophila melanogaster (Fruit fly) protein is LIM/homeobox protein Awh.